Consider the following 132-residue polypeptide: Intraflagellar transport protein 20 homolog (132 aa).

The stretch at 87–114 (EAQQQQLYALIAEKKMQLERYRIEYEAL) forms a coiled coil.

It localises to the golgi apparatus. Its subcellular location is the cis-Golgi network. The protein localises to the cytoplasm. It is found in the cytoskeleton. The protein resides in the microtubule organizing center. It localises to the centrosome. Its subcellular location is the centriole. The protein localises to the cell projection. It is found in the cilium. The protein resides in the cytoplasmic vesicle. It localises to the secretory vesicle. Its subcellular location is the acrosome. Its function is as follows. Involved in ciliary process assembly. May play a role in the trafficking of ciliary membrane proteins from the Golgi complex to the cilium. Regulates the platelet-derived growth factor receptor-alpha (PDGFRA) signaling pathway. Plays an important role in spermatogenesis, particularly spermiogenesis, when germ cells form flagella. This is Intraflagellar transport protein 20 homolog (ift20) from Xenopus tropicalis (Western clawed frog).